The sequence spans 366 residues: Transcription factor MYB61 (366 aa).

HTH myb-type domains are found at residues 9–61 (KQKL…INYL) and 62–116 (RPDL…KKKL). 2 consecutive DNA-binding regions (H-T-H motif) follow at residues 37 to 61 (WSSV…INYL) and 89 to 112 (WSQI…NSSI). The segment at 115 to 164 (KLKQRGIDPNTHKPISEVESFSDKDKPTTSNNKRSGNDHKSPSSSSATNQ) is disordered. The span at 124–141 (NTHKPISEVESFSDKDKP) shows a compositional bias: basic and acidic residues.

In terms of tissue distribution, expressed specifically in guard cells. Expressed in sink tissues, such as xylem, roots and developing seeds.

Its subcellular location is the nucleus. Functionally, transcription factor that coordinates a small network of downstream target genes required for several aspects of plant growth and development, such as xylem formation and xylem cell differentiation, and lateral root formation. Regulates a specific set of target genes by binding DNA to the AC cis-element 5'-ACCTAC-3'. Functions as a transcriptional regulator of stomatal closure. Plays a role the regulation of stomatal pore size independently of abscisic acid (ABA). Required for seed coat mucilage deposition during the development of the seed coat epidermis. Involved in the induction of trichome initiation and branching by positively regulating GL1 and GL2. Required for gibberellin (GA) biosynthesis and degradation by positively affecting the expression of the enzymes that convert GA9 into the bioactive GA4, as well as the enzymes involved in the degradation of GA4. The sequence is that of Transcription factor MYB61 from Arabidopsis thaliana (Mouse-ear cress).